The primary structure comprises 156 residues: Ribonuclease pancreatic (156 aa).

The signal sequence occupies residues 1-28; sequence MALEKSLALLPLLVLVLLVLGWVQPSLG. The span at 33–43 shows a compositional bias: basic and acidic residues; sequence AKKFQRQHMDS. Positions 33 to 52 are disordered; the sequence is AKKFQRQHMDSDGSPSSNPT. Positions 35 and 38 each coordinate substrate. The active-site Proton acceptor is the His-40. 4 cysteine pairs are disulfide-bonded: Cys-54/Cys-112, Cys-68/Cys-123, Cys-86/Cys-138, and Cys-93/Cys-100. Residue Asn-62 is glycosylated (N-linked (GlcNAc...) asparagine). Substrate contacts are provided by residues 69–73, Lys-94, and Arg-113; that span reads KPVNT. Asn-116 carries an N-linked (GlcNAc...) asparagine glycan. The Proton donor role is filled by His-147.

This sequence belongs to the pancreatic ribonuclease family. As to quaternary structure, monomer. Interacts with and forms tight 1:1 complexes with RNH1. Dimerization of two such complexes may occur. Interaction with RNH1 inhibits this protein.

Its subcellular location is the secreted. The enzyme catalyses an [RNA] containing cytidine + H2O = an [RNA]-3'-cytidine-3'-phosphate + a 5'-hydroxy-ribonucleotide-3'-[RNA].. It carries out the reaction an [RNA] containing uridine + H2O = an [RNA]-3'-uridine-3'-phosphate + a 5'-hydroxy-ribonucleotide-3'-[RNA].. Its function is as follows. Endonuclease that catalyzes the cleavage of RNA on the 3' side of pyrimidine nucleotides. Acts on single-stranded and double-stranded RNA. The protein is Ribonuclease pancreatic (RNASE1) of Saimiri sciureus (Common squirrel monkey).